The following is a 780-amino-acid chain: Acyl-CoA dehydrogenase family member 11 (780 aa).

An N6-acetyllysine modification is found at lysine 177. Tyrosine 324 bears the Phosphotyrosine mark. An N6-succinyllysine modification is found at lysine 391. Residues 504–514 (FCMTEPDVASS) and 538–540 (WSS) each bind FAD. Position 514 (serine 514) interacts with substrate. A substrate-binding site is contributed by 629 to 632 (GPGR). FAD contacts are provided by residues arginine 657, glutamine 727, and 727-731 (QVCGG). Glycine 755 contacts substrate. An FAD-binding site is contributed by 756–758 (PDE).

It belongs to the acyl-CoA dehydrogenase family. Homodimer. FAD is required as a cofactor. Widely expressed with highest levels in brain followed by liver, heart and kidney.

It is found in the peroxisome. Its subcellular location is the mitochondrion membrane. It carries out the reaction a 2,3-saturated acyl-CoA + oxidized [electron-transfer flavoprotein] + H(+) = a (2E)-enoyl-CoA + reduced [electron-transfer flavoprotein]. The enzyme catalyses docosanoyl-CoA + oxidized [electron-transfer flavoprotein] + H(+) = (2E)-docosenoyl-CoA + reduced [electron-transfer flavoprotein]. It catalyses the reaction tetracosanoyl-CoA + oxidized [electron-transfer flavoprotein] + H(+) = (2E)-tetracosenoyl-CoA + reduced [electron-transfer flavoprotein]. The catalysed reaction is eicosanoyl-CoA + oxidized [electron-transfer flavoprotein] + H(+) = (2E)-eicosenoyl-CoA + reduced [electron-transfer flavoprotein]. It carries out the reaction hexacosanoyl-CoA + oxidized [electron-transfer flavoprotein] + H(+) = (2E)-hexacosenoyl-CoA + reduced [electron-transfer flavoprotein]. The enzyme catalyses tricosanoyl-CoA + oxidized [electron-transfer flavoprotein] + H(+) = (2E)-tricosenoyl-CoA + reduced [electron-transfer flavoprotein]. It participates in lipid metabolism; fatty acid beta-oxidation. In terms of biological role, acyl-CoA dehydrogenase, that exhibits maximal activity towards saturated C22-CoA. Probably participates in beta-oxydation and energy production but could also play a role in the metabolism of specific fatty acids to control fatty acids composition of cellular lipids in brain. This Homo sapiens (Human) protein is Acyl-CoA dehydrogenase family member 11 (ACAD11).